The primary structure comprises 380 residues: Fibromodulin (380 aa).

The N-terminal stretch at 1 to 18 is a signal peptide; the sequence is MRWANILLVAGLCRASLG. The LRRNT domain maps to 71-109; that stretch reads EAQQASSWQCPQECDCPPNFSSAMYCDTRNLRYLPFVPT. A glycan (N-linked (GlcNAc...) asparagine) is linked at asparagine 89. LRR repeat units follow at residues 110 to 131, 134 to 147, 160 to 180, 181 to 202, 205 to 227, 228 to 248, 249 to 270, and 273 to 293; these read RMKY…AFDN, ELEW…QISS, NLER…PLPR, SLRE…ALEG, NLTA…KGLK, SLIL…GLPM, ALEQ…YFKV, and KLLY…STNT. Residue asparagine 131 is glycosylated (N-linked (GlcNAc...) (keratan sulfate) asparagine). Residue asparagine 170 is glycosylated (N-linked (GlcNAc...) (keratan sulfate) asparagine). Residue asparagine 205 is glycosylated (N-linked (GlcNAc...) (keratan sulfate) asparagine). Asparagine 295 carries N-linked (GlcNAc...) (keratan sulfate) asparagine glycosylation. LRR repeat units lie at residues 298–317 and 318–339; these read SILE…RVST and NLEN…SFCT. A disulfide bond links cysteine 338 and cysteine 371. N-linked (GlcNAc...) asparagine glycosylation is present at asparagine 345. The stretch at 348-371 is one LRR 11 repeat; sequence RLQVLRLDGNEIKRNAMPPDAPLC.

Belongs to the small leucine-rich proteoglycan (SLRP) family. SLRP class II subfamily. Binds to type I and type II collagen. Post-translationally, binds keratan sulfate chains.

The protein localises to the secreted. The protein resides in the extracellular space. It is found in the extracellular matrix. Affects the rate of fibrils formation. May have a primary role in collagen fibrillogenesis. The protein is Fibromodulin (FMOD) of Gallus gallus (Chicken).